The primary structure comprises 88 residues: Small ribosomal subunit protein bS20 (88 aa).

This sequence belongs to the bacterial ribosomal protein bS20 family.

Binds directly to 16S ribosomal RNA. The polypeptide is Small ribosomal subunit protein bS20 (Bartonella henselae (strain ATCC 49882 / DSM 28221 / CCUG 30454 / Houston 1) (Rochalimaea henselae)).